The following is a 165-amino-acid chain: UPF0303 protein Rleg2_2653 (165 aa).

Belongs to the UPF0303 family.

This is UPF0303 protein Rleg2_2653 from Rhizobium leguminosarum bv. trifolii (strain WSM2304).